The primary structure comprises 152 residues: Avidin (152 aa).

The first 24 residues, 1 to 24 (MVHATSPLLLLLLLSLALVAPGLS), serve as a signal peptide directing secretion. The 124-residue stretch at 26-149 (RKCSLTGKWT…GINIFTRLRT (124 aa)) folds into the Avidin-like domain. Cysteine 28 and cysteine 107 form a disulfide bridge. The N-linked (GlcNAc...) asparagine glycan is linked to asparagine 41. Tyrosine 57 is a biotin binding site.

Belongs to the avidin/streptavidin family. In terms of assembly, homotetramer. N-linked glycan at Asn-41 consists of GlcNAc(beta1-2)Man(alpha1-3)[GlcNAc(beta1-4)][Man(alpha1-?)Man(alpha1-6)] Man(beta1-4)GlcNAc(beta1-4)GlcNAc. As to expression, synthesized in hen oviduct and concentrated in egg white (where it represents 0.05% of the total protein).

The protein localises to the secreted. The biological function of avidin is not known. Forms a strong non-covalent specific complex with biotin (one molecule of biotin per subunit of avidin). This is Avidin (AVD) from Gallus gallus (Chicken).